The primary structure comprises 371 residues: Aspartate-semialdehyde dehydrogenase (371 aa).

NADP(+) contacts are provided by residues R11–V14, T38–S39, and Q75. Position 104 (R104) interacts with phosphate. C137 serves as the catalytic Acyl-thioester intermediate. Residue Q164 participates in substrate binding. S167–G168 provides a ligand contact to NADP(+). E243 is a binding site for substrate. K246 contributes to the phosphate binding site. Substrate is bound at residue R269. The active-site Proton acceptor is H276. Q352 is a binding site for NADP(+).

This sequence belongs to the aspartate-semialdehyde dehydrogenase family. As to quaternary structure, homodimer.

The catalysed reaction is L-aspartate 4-semialdehyde + phosphate + NADP(+) = 4-phospho-L-aspartate + NADPH + H(+). It functions in the pathway amino-acid biosynthesis; L-lysine biosynthesis via DAP pathway; (S)-tetrahydrodipicolinate from L-aspartate: step 2/4. Its pathway is amino-acid biosynthesis; L-methionine biosynthesis via de novo pathway; L-homoserine from L-aspartate: step 2/3. It participates in amino-acid biosynthesis; L-threonine biosynthesis; L-threonine from L-aspartate: step 2/5. Functionally, catalyzes the NADPH-dependent formation of L-aspartate-semialdehyde (L-ASA) by the reductive dephosphorylation of L-aspartyl-4-phosphate. The polypeptide is Aspartate-semialdehyde dehydrogenase (Buchnera aphidicola subsp. Acyrthosiphon pisum (strain APS) (Acyrthosiphon pisum symbiotic bacterium)).